The chain runs to 168 residues: Lipoprotein signal peptidase (168 aa).

Transmembrane regions (helical) follow at residues 57–77 (PKEV…LYVF) and 86–106 (FILP…DRIT). Active-site residues include Asp112 and Asp138. A helical transmembrane segment spans residues 131 to 151 (WPIFNIADSAITIGACLLILF).

Belongs to the peptidase A8 family.

The protein resides in the cell inner membrane. The catalysed reaction is Release of signal peptides from bacterial membrane prolipoproteins. Hydrolyzes -Xaa-Yaa-Zaa-|-(S,diacylglyceryl)Cys-, in which Xaa is hydrophobic (preferably Leu), and Yaa (Ala or Ser) and Zaa (Gly or Ala) have small, neutral side chains.. It participates in protein modification; lipoprotein biosynthesis (signal peptide cleavage). This protein specifically catalyzes the removal of signal peptides from prolipoproteins. The polypeptide is Lipoprotein signal peptidase (Chlorobium phaeobacteroides (strain DSM 266 / SMG 266 / 2430)).